Reading from the N-terminus, the 330-residue chain is Sulfate/thiosulfate import ATP-binding protein CysA (330 aa).

Residues 3–237 form the ABC transporter domain; sequence IEIRNINKQF…PASEFVYHFL (235 aa). Residue 35–42 coordinates ATP; the sequence is GPSGCGKT.

The protein belongs to the ABC transporter superfamily. Sulfate/tungstate importer (TC 3.A.1.6) family. The complex is composed of two ATP-binding proteins (CysA), two transmembrane proteins (CysT and CysW) and a solute-binding protein (CysP).

It localises to the cell inner membrane. The catalysed reaction is sulfate(out) + ATP + H2O = sulfate(in) + ADP + phosphate + H(+). It catalyses the reaction thiosulfate(out) + ATP + H2O = thiosulfate(in) + ADP + phosphate + H(+). In terms of biological role, part of the ABC transporter complex CysAWTP involved in sulfate/thiosulfate import. Responsible for energy coupling to the transport system. The sequence is that of Sulfate/thiosulfate import ATP-binding protein CysA from Pectobacterium atrosepticum (strain SCRI 1043 / ATCC BAA-672) (Erwinia carotovora subsp. atroseptica).